Consider the following 702-residue polypeptide: Elongation factor G (702 aa).

Residues 9–292 (DRTRNIGIMA…AVVDYLPSPL (284 aa)) enclose the tr-type G domain. GTP-binding positions include 18–25 (AHIDAGKT), 91–95 (DTPGH), and 145–148 (NKMD).

This sequence belongs to the TRAFAC class translation factor GTPase superfamily. Classic translation factor GTPase family. EF-G/EF-2 subfamily.

The protein localises to the cytoplasm. Its function is as follows. Catalyzes the GTP-dependent ribosomal translocation step during translation elongation. During this step, the ribosome changes from the pre-translocational (PRE) to the post-translocational (POST) state as the newly formed A-site-bound peptidyl-tRNA and P-site-bound deacylated tRNA move to the P and E sites, respectively. Catalyzes the coordinated movement of the two tRNA molecules, the mRNA and conformational changes in the ribosome. The chain is Elongation factor G from Oenococcus oeni (strain ATCC BAA-331 / PSU-1).